Consider the following 232-residue polypeptide: Phosphatidylserine decarboxylase proenzyme (232 aa).

S190 (schiff-base intermediate with substrate; via pyruvic acid) is an active-site residue. Position 190 is a pyruvic acid (Ser); by autocatalysis (S190).

The protein belongs to the phosphatidylserine decarboxylase family. PSD-A subfamily. In terms of assembly, heterodimer of a large membrane-associated beta subunit and a small pyruvoyl-containing alpha subunit. Requires pyruvate as cofactor. In terms of processing, is synthesized initially as an inactive proenzyme. Formation of the active enzyme involves a self-maturation process in which the active site pyruvoyl group is generated from an internal serine residue via an autocatalytic post-translational modification. Two non-identical subunits are generated from the proenzyme in this reaction, and the pyruvate is formed at the N-terminus of the alpha chain, which is derived from the carboxyl end of the proenzyme. The post-translation cleavage follows an unusual pathway, termed non-hydrolytic serinolysis, in which the side chain hydroxyl group of the serine supplies its oxygen atom to form the C-terminus of the beta chain, while the remainder of the serine residue undergoes an oxidative deamination to produce ammonia and the pyruvoyl prosthetic group on the alpha chain.

The protein resides in the cell membrane. The enzyme catalyses a 1,2-diacyl-sn-glycero-3-phospho-L-serine + H(+) = a 1,2-diacyl-sn-glycero-3-phosphoethanolamine + CO2. It functions in the pathway phospholipid metabolism; phosphatidylethanolamine biosynthesis; phosphatidylethanolamine from CDP-diacylglycerol: step 2/2. Functionally, catalyzes the formation of phosphatidylethanolamine (PtdEtn) from phosphatidylserine (PtdSer). The protein is Phosphatidylserine decarboxylase proenzyme of Rhodopseudomonas palustris (strain HaA2).